The sequence spans 174 residues: Photosystem II repair protein PSB27-H1, chloroplastic (174 aa).

The tract at residues 1-35 (MASASATATLLKPNLPPHKPTIIASSVSPPLPPPR) is disordered. Position 94 is a phosphothreonine (Thr-94). A Phosphotyrosine modification is found at Tyr-132.

Belongs to the Psb27 family.

The protein localises to the plastid. The protein resides in the chloroplast thylakoid membrane. Probably involved in repair of photodamaged photosystem II (PSII). The sequence is that of Photosystem II repair protein PSB27-H1, chloroplastic (PSB27-1) from Arabidopsis thaliana (Mouse-ear cress).